A 1732-amino-acid chain; its full sequence is Polycystin-1-like protein 3 (1732 aa).

Positions 1–23 are cleaved as a signal peptide; that stretch reads MFFKGGSWLWLYIRTSIILGSEL. Topologically, residues 24–697 are extracellular; sequence NSPAPHGQNN…IKLFLRVTNN (674 aa). Residues 30–138 form the C-type lectin domain; it reads GQNNCYQLNR…CLLKYYFICQ (109 aa). 2 disulfide bridges follow: C51/C137 and C112/C129. 5 N-linked (GlcNAc...) asparagine glycosylation sites follow: N286, N363, N515, N537, and N575. The 163-residue stretch at 523–685 folds into the GAIN-B domain; it reads TSLNMSTHQL…FVVPRTVNVE (163 aa). 2 disulfides stabilise this stretch: C635-C663 and C650-C665. Residues 635 to 685 are GPS; the sequence is CYYWEIHNQTWSSAGCQVGPQSTILRTQCLCNHLTFFASDFFVVPRTVNVE. Residues 698–718 traverse the membrane as a helical segment; the sequence is PVGVSLLASLLGFYVITVVWA. Topologically, residues 719-905 are cytoplasmic; sequence RKKDQADMQK…PWNQFTRVQR (187 aa). Residues 743–860 form the PLAT domain; that stretch reads FHYLIQVYTG…GDCELDRVFI (118 aa). Residues 906–926 traverse the membrane as a helical segment; it reads LSCCMTLLLCNMVINVMFWKI. Over 927–939 the chain is Extracellular; sequence NSTTAKRDEQMRP. The helical transmembrane segment at 940–960 threads the bilayer; sequence FAVAWSELLVSIHTAVILFPI. Topologically, residues 961–1154 are cytoplasmic; that stretch reads NLVIGRLFPL…ISNGLSKWLT (194 aa). The helical transmembrane segment at 1155–1175 threads the bilayer; sequence SVCWLLLGFTSLASAFFTALY. Residues 1176–1198 are Extracellular-facing; sequence SLELSKDQATSWMISIILSVLQN. The chain crosses the membrane as a helical span at residues 1199–1219; it reads IFISQPVKVVFFTFLYSLMMS. Residues 1220–1289 are Cytoplasmic-facing; the sequence is RMPRLNKENE…KLTGDILVQI (70 aa). The helical transmembrane segment at 1290 to 1300 threads the bilayer; the sequence is LFLTLLMTAIY. Residues 1301–1461 lie on the Extracellular side of the membrane; that stretch reads SAKNSNRFYL…SFTSLQMSKK (161 aa). The helical transmembrane segment at 1462 to 1491 threads the bilayer; that stretch reads GCVWSIISQVIYYLLVCYYAFIQGCQLKQQ. At 1492-1500 the chain is on the cytoplasmic side; it reads KWRFFTGKR. Residues 1501-1519 form a helical membrane-spanning segment; sequence NILDTSIILISFILLGLDM. The Extracellular portion of the chain corresponds to 1520–1550; that stretch reads KSISLHKKNMARYRDDQDRFISFYEAVKVNS. A helical membrane pass occupies residues 1551-1572; the sequence is AATHLVGFPVLLATVQLWNLLR. Residues 1573-1589 are Cytoplasmic-facing; the sequence is HSPRLRVISRTLSRAWD. A helical membrane pass occupies residues 1590 to 1614; it reads EVVGFLLIILILLTGYAIAFNLLFG. The segment at 1613–1651 is channel pore-region; it reads FGCSISDYRTFFSSAVTVVGLLMGISHQEEVFALDPVLG. The Extracellular segment spans residues 1615–1647; it reads CSISDYRTFFSSAVTVVGLLMGISHQEEVFALD. The helical transmembrane segment at 1648–1667 threads the bilayer; that stretch reads PVLGTFLILTSVILMVLVVI. Residues 1668–1732 are Cytoplasmic-facing; that stretch reads NLFVSAILMA…SDTEVLDELP (65 aa).

This sequence belongs to the polycystin family. Heterotetramer with PKD2L1, composed of 3 subunit of PKD2L1 and 1 subunit of PKD1L3. Autoproteolytically processed at the GPS region of the GAIN-B domain; this cleavage modulates receptor activity. As to expression, highly expressed in placenta, weakly in heart and lung.

Its subcellular location is the cell membrane. The enzyme catalyses Ca(2+)(in) = Ca(2+)(out). It catalyses the reaction Na(+)(in) = Na(+)(out). It carries out the reaction K(+)(in) = K(+)(out). The catalysed reaction is Mg(2+)(in) = Mg(2+)(out). Its activity is regulated as follows. The non-selective cation channel is gated following an off-response property by acid: gated open after the removal of acid stimulus, but not during acid application. Regulation of non-selective cation channel activity by external Ca(2+) is bimodal, first sensitizing and subsequently inactivating the current. Functionally, pore-forming subunit of a heterotetrameric, non-selective cation channel that is permeable to Ca(2+). Also shows permeability towards NA(1+), K(+) and Mg(2+). Heterotetrameric complex channel is activated by external low pH and Ca(2+), but opens only when the extracellular pH rises again and after the removal of acid stimulus. May act as a sour taste receptor in gustatory cells; however, its contribution to sour taste perception is unclear in vivo and may be indirect. This Homo sapiens (Human) protein is Polycystin-1-like protein 3.